The sequence spans 207 residues: Large ribosomal subunit protein uL4 (207 aa).

The tract at residues 49–78 (HAVKNRSAVSGGGRKPWRQKGTGRARQGSI) is disordered.

This sequence belongs to the universal ribosomal protein uL4 family. Part of the 50S ribosomal subunit.

In terms of biological role, one of the primary rRNA binding proteins, this protein initially binds near the 5'-end of the 23S rRNA. It is important during the early stages of 50S assembly. It makes multiple contacts with different domains of the 23S rRNA in the assembled 50S subunit and ribosome. Its function is as follows. Forms part of the polypeptide exit tunnel. The chain is Large ribosomal subunit protein uL4 (rplD) from Streptococcus pyogenes serotype M1.